The chain runs to 731 residues: Vezatin (731 aa).

Helical transmembrane passes span 91-111 and 114-134; these read LATPNIWDLSMLFAFISLLVM and TWWIVSSWLVWGVILFVYLVI. Residues 382 to 414 are a coiled coil; the sequence is VRSLQLHLKALLNEVIILEDELEKLVCTKETQE. 2 disordered regions span residues 570–671 and 710–731; these read PVDP…DSLQ and QTFGDEEEEQIIEENKNKIEEK. Polar residues predominate over residues 577–586; that stretch reads ISNSEPSMNS. Residues 590-601 are compositionally biased toward basic and acidic residues; it reads KVSKNDTEEESS. Residues 658-671 are compositionally biased toward polar residues; the sequence is GLTTAPPTPRDSLQ. Residues 712-721 show a composition bias toward acidic residues; that stretch reads FGDEEEEQII. Residues 722-731 are compositionally biased toward basic and acidic residues; sequence EENKNKIEEK.

This sequence belongs to the vezatin family. In terms of assembly, interacts with USH2A (via the cytoplasmic region); the interaction associates VEZT with the USH2 complex at the stereocilia base. Interacts with myosin MYO7A and the cadherin-catenins complex.

It is found in the cell membrane. Its subcellular location is the cell projection. It localises to the stereocilium membrane. The protein localises to the cell junction. The protein resides in the adherens junction. It is found in the nucleus. Its subcellular location is the cytoplasmic vesicle. It localises to the secretory vesicle. The protein localises to the acrosome. Its function is as follows. Plays a pivotal role in the establishment of adherens junctions and their maintenance in adult life. Required for morphogenesis of the preimplantation embryo, and for the implantation process. This Pongo abelii (Sumatran orangutan) protein is Vezatin (VEZT).